The sequence spans 308 residues: MQIYPLRLLPNKIDFDFMNFKAVSYSFSIILSLISFIWIGIYKFNFGIDFAGGIVIEVRLDQAPDLPKMRGVLGELGIGEVVLQNFGSERDLSIRFGISSEENLMKNIELIKASLQSSFPYKFEYRKVDFVGPQVGRQLIEAGAMAMLSSFLAIMVYIWVRFEWYFGLGILIALVHDVILALGFMSITKLDFNLSTIAAVLTIIGYSVNDSVVIYDRIRENLRKYHKKNITEIINLSINETLSRTILTVITTLLANLALMLFGGEAIRSFSVLVFFGIIAGTYSSIFISAPILTMFANRKFNNKVIER.

The next 6 helical transmembrane spans lie at 22-42 (AVSY…IGIY), 140-160 (IEAG…YIWV), 164-184 (WYFG…ALGF), 194-214 (LSTI…SVVI), 246-266 (ILTV…GGEA), and 272-292 (VLVF…SAPI).

The protein belongs to the SecD/SecF family. SecF subfamily. In terms of assembly, forms a complex with SecD. Part of the essential Sec protein translocation apparatus which comprises SecA, SecYEG and auxiliary proteins SecDF-YajC and YidC.

It localises to the cell inner membrane. Functionally, part of the Sec protein translocase complex. Interacts with the SecYEG preprotein conducting channel. SecDF uses the proton motive force (PMF) to complete protein translocation after the ATP-dependent function of SecA. In Rickettsia akari (strain Hartford), this protein is Protein translocase subunit SecF.